Consider the following 163-residue polypeptide: Large ribosomal subunit protein uL10 (163 aa).

Belongs to the universal ribosomal protein uL10 family. As to quaternary structure, part of the ribosomal stalk of the 50S ribosomal subunit. The N-terminus interacts with L11 and the large rRNA to form the base of the stalk. The C-terminus forms an elongated spine to which L12 dimers bind in a sequential fashion forming a multimeric L10(L12)X complex.

Forms part of the ribosomal stalk, playing a central role in the interaction of the ribosome with GTP-bound translation factors. This Blochmanniella pennsylvanica (strain BPEN) protein is Large ribosomal subunit protein uL10.